The sequence spans 282 residues: MEVITSIKEAKQTVKNWKSHNLSIGYVPTMGFLHDGHLSLVKNAKTQDKVIVSIFVNPMQFGPNEDFSSYPRDLERDIKMCQDNGVDMVFIPDAAQMYLKNFSTYVDMNTITDKLCGAKRLGHFRGVCTVLAKFFNILNPDIVYMGQKDAQQCVVVRHMVDDLNFDLKIQICPIIREEDGLAKSSRNVYLSEEERKASLAISQSIFLAEKLVQEGEKDTSKIIQAMKDILEKEKLIKIDYIELVDFNTMENIKNIADNVLGAVAAFVGKTRLIDNFLVQGLK.

30–37 (MGFLHDGH) is a binding site for ATP. The active-site Proton donor is His-37. Gln-60 is a (R)-pantoate binding site. Residue Gln-60 participates in beta-alanine binding. 146-149 (GQKD) is a binding site for ATP. A (R)-pantoate-binding site is contributed by Gln-152. Residues Ile-175 and 183–186 (KSSR) each bind ATP.

This sequence belongs to the pantothenate synthetase family. As to quaternary structure, homodimer.

It localises to the cytoplasm. The enzyme catalyses (R)-pantoate + beta-alanine + ATP = (R)-pantothenate + AMP + diphosphate + H(+). Its pathway is cofactor biosynthesis; (R)-pantothenate biosynthesis; (R)-pantothenate from (R)-pantoate and beta-alanine: step 1/1. Functionally, catalyzes the condensation of pantoate with beta-alanine in an ATP-dependent reaction via a pantoyl-adenylate intermediate. In Campylobacter jejuni (strain RM1221), this protein is Pantothenate synthetase.